The chain runs to 240 residues: MQIFPAIDLKNGQCVRLFQGDFSKKTVVNEDPIAQAKAFATDGATYLHIVDLDGALEGRPINLEIIQRMKKAAKIPVQVGGGIRSMAQVDYYLESGIDRVIIGSAALTNPDFLRAAVQKYGAKIVAGIDAKNGFVATRGWLDVSQVSYLDLAKRMEKVGVETIIYTDISRDGTLTGPNLEQMANLKEHVKVSLIASGGVSSRADLEALAQLGLYGAIAGKALYNHDISMSDIVEVEQIAY.

The active-site Proton acceptor is Asp-8. Asp-129 serves as the catalytic Proton donor.

The protein belongs to the HisA/HisF family.

It localises to the cytoplasm. The enzyme catalyses 1-(5-phospho-beta-D-ribosyl)-5-[(5-phospho-beta-D-ribosylamino)methylideneamino]imidazole-4-carboxamide = 5-[(5-phospho-1-deoxy-D-ribulos-1-ylimino)methylamino]-1-(5-phospho-beta-D-ribosyl)imidazole-4-carboxamide. Its pathway is amino-acid biosynthesis; L-histidine biosynthesis; L-histidine from 5-phospho-alpha-D-ribose 1-diphosphate: step 4/9. The sequence is that of 1-(5-phosphoribosyl)-5-[(5-phosphoribosylamino)methylideneamino] imidazole-4-carboxamide isomerase from Listeria monocytogenes serotype 4b (strain F2365).